Reading from the N-terminus, the 132-residue chain is Putative RNase AF_2433 (132 aa).

Catalysis depends on residues R90 and H95. Positions 90-97 (RNWLVHRY) match the RX(4)HXY motif motif. Y97 is subject to O-di-AMP-tyrosine.

Belongs to the HepT RNase toxin family. Homodimer, probably forms a complex with cognate antitoxin AF_2432. Post-translationally, modified by cognate antitoxin AF_2432; probably at least 2 successive AMPylation events occur on Tyr-97.

Probable toxic component of a putative type VII toxin-antitoxin (TA) system, probably an RNase. Probably neutralized by cognate antitoxin AF_2432. Neutralization may be due to AMPylation by AF_2432. This chain is Putative RNase AF_2433, found in Archaeoglobus fulgidus (strain ATCC 49558 / DSM 4304 / JCM 9628 / NBRC 100126 / VC-16).